Consider the following 135-residue polypeptide: Interleukin-4 (135 aa).

A signal peptide spans 1-24; the sequence is MGLTYQLIPVLVCLLVCTSHLVHG. Intrachain disulfides connect Cys-27-Cys-135, Cys-48-Cys-85, and Cys-70-Cys-105. N-linked (GlcNAc...) asparagine glycosylation is present at Asn-62.

It belongs to the IL-4/IL-13 family.

Its subcellular location is the secreted. Its function is as follows. Participates in at least several B-cell activation processes as well as of other cell types. It is a costimulator of DNA-synthesis. It induces the expression of class II MHC molecules on resting B-cells. It enhances both secretion and cell surface expression of IgE and IgG1. It also regulates the expression of the low affinity Fc receptor for IgE (CD23) on both lymphocytes and monocytes. Positively regulates IL31RA expression in macrophages. Stimulates autophagy in dendritic cells by interfering with mTORC1 signaling and through the induction of RUFY4. The polypeptide is Interleukin-4 (IL4) (Bubalus bubalis (Domestic water buffalo)).